A 61-amino-acid chain; its full sequence is Small ribosomal subunit protein uS14 (61 aa).

Positions 24, 27, 40, and 43 each coordinate Zn(2+).

It belongs to the universal ribosomal protein uS14 family. Zinc-binding uS14 subfamily. As to quaternary structure, part of the 30S ribosomal subunit. Contacts proteins S3 and S10. The cofactor is Zn(2+).

Its function is as follows. Binds 16S rRNA, required for the assembly of 30S particles and may also be responsible for determining the conformation of the 16S rRNA at the A site. The protein is Small ribosomal subunit protein uS14 of Clostridium botulinum (strain 657 / Type Ba4).